The sequence spans 44 residues: Small ribosomal subunit protein eS31 (44 aa).

4 residues coordinate Zn(2+): cysteine 18, cysteine 21, cysteine 35, and cysteine 38. The C4-type zinc-finger motif lies at 18 to 38; sequence CPRCGDTVLAEHEDRQHCGKC.

Belongs to the eukaryotic ribosomal protein eS31 family. As to quaternary structure, part of the 30S ribosomal subunit. Requires Zn(2+) as cofactor.

This Haloarcula marismortui (strain ATCC 43049 / DSM 3752 / JCM 8966 / VKM B-1809) (Halobacterium marismortui) protein is Small ribosomal subunit protein eS31.